The following is a 280-amino-acid chain: 4-diphosphocytidyl-2-C-methyl-D-erythritol kinase (280 aa).

Lys8 is an active-site residue. ATP is bound at residue 91 to 101 (PVAAGLAGGSA). Asp133 is an active-site residue.

It belongs to the GHMP kinase family. IspE subfamily.

It catalyses the reaction 4-CDP-2-C-methyl-D-erythritol + ATP = 4-CDP-2-C-methyl-D-erythritol 2-phosphate + ADP + H(+). It participates in isoprenoid biosynthesis; isopentenyl diphosphate biosynthesis via DXP pathway; isopentenyl diphosphate from 1-deoxy-D-xylulose 5-phosphate: step 3/6. Functionally, catalyzes the phosphorylation of the position 2 hydroxy group of 4-diphosphocytidyl-2C-methyl-D-erythritol. This is 4-diphosphocytidyl-2-C-methyl-D-erythritol kinase from Clostridium acetobutylicum (strain ATCC 824 / DSM 792 / JCM 1419 / IAM 19013 / LMG 5710 / NBRC 13948 / NRRL B-527 / VKM B-1787 / 2291 / W).